A 488-amino-acid chain; its full sequence is L-arabinose isomerase 1 (488 aa).

4 residues coordinate Mn(2+): glutamate 306, glutamate 331, histidine 348, and histidine 447.

The protein belongs to the arabinose isomerase family. Mn(2+) serves as cofactor.

It catalyses the reaction beta-L-arabinopyranose = L-ribulose. It participates in carbohydrate degradation; L-arabinose degradation via L-ribulose; D-xylulose 5-phosphate from L-arabinose (bacterial route): step 1/3. Its function is as follows. Catalyzes the conversion of L-arabinose to L-ribulose. The polypeptide is L-arabinose isomerase 1 (Clostridium acetobutylicum (strain ATCC 824 / DSM 792 / JCM 1419 / IAM 19013 / LMG 5710 / NBRC 13948 / NRRL B-527 / VKM B-1787 / 2291 / W)).